Consider the following 310-residue polypeptide: tRNA-cytidine(32) 2-sulfurtransferase (310 aa).

Positions 44–49 (SGGKDS) match the PP-loop motif motif. [4Fe-4S] cluster-binding residues include cysteine 119, cysteine 122, and cysteine 210.

It belongs to the TtcA family. As to quaternary structure, homodimer. Mg(2+) serves as cofactor. The cofactor is [4Fe-4S] cluster.

The protein localises to the cytoplasm. It catalyses the reaction cytidine(32) in tRNA + S-sulfanyl-L-cysteinyl-[cysteine desulfurase] + AH2 + ATP = 2-thiocytidine(32) in tRNA + L-cysteinyl-[cysteine desulfurase] + A + AMP + diphosphate + H(+). It functions in the pathway tRNA modification. Functionally, catalyzes the ATP-dependent 2-thiolation of cytidine in position 32 of tRNA, to form 2-thiocytidine (s(2)C32). The sulfur atoms are provided by the cysteine/cysteine desulfurase (IscS) system. This is tRNA-cytidine(32) 2-sulfurtransferase from Saccharophagus degradans (strain 2-40 / ATCC 43961 / DSM 17024).